Reading from the N-terminus, the 276-residue chain is uncharacterized protein (276 aa).

The AB hydrolase-1 domain occupies 20–137 (PVLIFIPGAN…PPINTFLPDS (118 aa)).

It belongs to the AB hydrolase superfamily.

This is an uncharacterized protein from Staphylococcus aureus (strain MRSA252).